We begin with the raw amino-acid sequence, 259 residues long: Aspartate/glutamate leucyltransferase (259 aa).

It belongs to the R-transferase family. Bpt subfamily.

It localises to the cytoplasm. The catalysed reaction is N-terminal L-glutamyl-[protein] + L-leucyl-tRNA(Leu) = N-terminal L-leucyl-L-glutamyl-[protein] + tRNA(Leu) + H(+). It catalyses the reaction N-terminal L-aspartyl-[protein] + L-leucyl-tRNA(Leu) = N-terminal L-leucyl-L-aspartyl-[protein] + tRNA(Leu) + H(+). Functionally, functions in the N-end rule pathway of protein degradation where it conjugates Leu from its aminoacyl-tRNA to the N-termini of proteins containing an N-terminal aspartate or glutamate. This chain is Aspartate/glutamate leucyltransferase, found in Sinorhizobium medicae (strain WSM419) (Ensifer medicae).